Here is a 130-residue protein sequence, read N- to C-terminus: uncharacterized protein (130 aa).

The interval 1–62 (MRMYSSDAHE…ASGVGSSCKR (62 aa)) is disordered. Positions 21 to 30 (PPHPLPPTGS) are enriched in pro residues.

This is an uncharacterized protein from Homo sapiens (Human).